The primary structure comprises 277 residues: Large ribosomal subunit protein uL2 (277 aa).

Residues 212-277 (RWRGKRPHVR…KFIVRGRKSK (66 aa)) are disordered. The span at 254–277 (TAGKKTRDKKKASTKFIVRGRKSK) shows a compositional bias: basic residues.

It belongs to the universal ribosomal protein uL2 family. As to quaternary structure, part of the 50S ribosomal subunit. Forms a bridge to the 30S subunit in the 70S ribosome.

Its function is as follows. One of the primary rRNA binding proteins. Required for association of the 30S and 50S subunits to form the 70S ribosome, for tRNA binding and peptide bond formation. It has been suggested to have peptidyltransferase activity; this is somewhat controversial. Makes several contacts with the 16S rRNA in the 70S ribosome. This chain is Large ribosomal subunit protein uL2, found in Leuconostoc citreum (strain KM20).